Consider the following 342-residue polypeptide: Aquaporin-7 (342 aa).

Residues 1–36 (MVQASGHRRSTRGSKMVSWSVIAKIQEILQRKMVRE) lie on the Cytoplasmic side of the membrane. S20 is subject to Phosphoserine. The helical transmembrane segment at 37–54 (FLAEFMSTYVMMVFGLGS) threads the bilayer. At 55–67 (VAHMVLNKKYGSY) the chain is on the extracellular side. The chain crosses the membrane as a helical span at residues 68-85 (LGVNLGFGFGVTMGVHVA). Topologically, residues 86–89 (GRIS) are cytoplasmic. Positions 90–103 (GAHMNAAVTFANCA) form an intramembrane region, discontinuously helical. The short motif at 94–96 (NAA) is the NPA 1 element. Over 104-111 (LGRVPWRK) the chain is Cytoplasmic. Residues 112–132 (FPVYVLGQFLGSFLAAATIYS) form a helical membrane-spanning segment. Residues 133–170 (LFYTAILHFSGGQLMVTGPVATAGIFATYLPDHMTLWR) are Extracellular-facing. The chain crosses the membrane as a helical span at residues 171 to 188 (GFLNEAWLTGMLQLCLFA). The Cytoplasmic portion of the chain corresponds to 189-200 (ITDQENNPALPG). The helical transmembrane segment at 201-217 (TEALVIGILVVIIGVSL) threads the bilayer. Topologically, residues 218–221 (GMNT) are extracellular. Positions 222 to 235 (GYAINPSRDLPPRI) form an intramembrane region, discontinuously helical. The short motif at 226 to 228 (NPS) is the NPA 2 element. Over 236–253 (FTFIAGWGKQVFSNGENW) the chain is Extracellular. The helical transmembrane segment at 254-275 (WWVPVVAPLLGAYLGGIIYLVF) threads the bilayer. The Cytoplasmic portion of the chain corresponds to 276–342 (IGSTIPREPL…LHESMALEHF (67 aa)).

Belongs to the MIP/aquaporin (TC 1.A.8) family. As to quaternary structure, homotetramer; each monomer provides an independent glycerol/water pore. Two homotetramers on opposing membranes can dimerize, forming a cell-cell junction. Interacts with PLIN1. Phosphorylation by PKA could prevent the interaction with PLIN1. In terms of tissue distribution, detected in the sperm head (at protein level). Detected in white adipose tissue.

The protein localises to the cell membrane. Its subcellular location is the cytoplasmic vesicle membrane. It is found in the lipid droplet. It carries out the reaction glycerol(in) = glycerol(out). The catalysed reaction is H2O(in) = H2O(out). The enzyme catalyses urea(in) = urea(out). Glycerol transport is regulated by pH, with the porin being permeable to glycerol at pH 7.4 but not at pH 5.5. Water permeability, however, is not influenced by pH. Inhibited by mercury ions. In terms of biological role, aquaglyceroporins form homotetrameric transmembrane channels, with each monomer independently mediating glycerol and water transport across the plasma membrane along their osmotic gradient. Could also be permeable to urea. Mediates the efflux of glycerol, formed upon triglyceride hydrolysis, to avoid its accumulation in adipocytes and to make it available to other tissues. In the kidney, mediates the reabsorption of glycerol, preventing its loss in urine, again participating to energy homeostasis. In pancreatic beta cells, it also mediates the efflux of glycerol, regulating its intracellular levels. The polypeptide is Aquaporin-7 (Homo sapiens (Human)).